Consider the following 122-residue polypeptide: Small ribosomal subunit protein uS13 (122 aa).

The tract at residues 94 to 122 (RGLPVRGQKTKTNARTRKGPRKTVAGKRK) is disordered.

It belongs to the universal ribosomal protein uS13 family. In terms of assembly, part of the 30S ribosomal subunit. Forms a loose heterodimer with protein S19. Forms two bridges to the 50S subunit in the 70S ribosome.

Functionally, located at the top of the head of the 30S subunit, it contacts several helices of the 16S rRNA. In the 70S ribosome it contacts the 23S rRNA (bridge B1a) and protein L5 of the 50S subunit (bridge B1b), connecting the 2 subunits; these bridges are implicated in subunit movement. Contacts the tRNAs in the A and P-sites. The sequence is that of Small ribosomal subunit protein uS13 from Syntrophotalea carbinolica (strain DSM 2380 / NBRC 103641 / GraBd1) (Pelobacter carbinolicus).